A 392-amino-acid chain; its full sequence is MNIHEYQGKDILRKFGVAVPKGIVAFSPEEAKQAAIQLFEEQNSPVVVIKAQIHAGGRGKAGGVKLAKSPEEVFDIAQQMLGITLVTHQTGPEGKEVRRLLVEEGMNIDKEFYVGITLDRSTSQNVLMVSTEGGMEIEKVAEETPEKLLKIQVNPLFGLQAFQARQAAFFLELEGEQFKNTVKFITALYNAYTSIDAAIAEINPLVVTKEGRVLALDAKINFDSNALFRHKDFLELRDISEEDPFEVEASKSNLNYVRLDGNVGCMVNGAGLAMGTMDMIQLAGGRPANFLDVGGGASPQTVEEGFKIILSDKNVKAILVNIFGGIVRCDRVAGGIIEAAKKVDLHLPVIVRLEGTNASIAQKMLDESGLNLIAAKGLHDAAKKVHEALEPA.

The ATP-grasp domain occupies 9 to 248 (KDILRKFGVA…ISEEDPFEVE (240 aa)). ATP contacts are provided by residues Lys-50, 57–59 (GRG), Glu-103, Met-106, and Glu-111. 2 residues coordinate Mg(2+): Asn-203 and Asp-217. Substrate contacts are provided by residues Asn-268 and 325–327 (GIV).

It belongs to the succinate/malate CoA ligase beta subunit family. In terms of assembly, heterotetramer of two alpha and two beta subunits. Mg(2+) is required as a cofactor.

The enzyme catalyses succinate + ATP + CoA = succinyl-CoA + ADP + phosphate. The catalysed reaction is GTP + succinate + CoA = succinyl-CoA + GDP + phosphate. It participates in carbohydrate metabolism; tricarboxylic acid cycle; succinate from succinyl-CoA (ligase route): step 1/1. Functionally, succinyl-CoA synthetase functions in the citric acid cycle (TCA), coupling the hydrolysis of succinyl-CoA to the synthesis of either ATP or GTP and thus represents the only step of substrate-level phosphorylation in the TCA. The beta subunit provides nucleotide specificity of the enzyme and binds the substrate succinate, while the binding sites for coenzyme A and phosphate are found in the alpha subunit. The protein is Succinate--CoA ligase [ADP-forming] subunit beta of Chlorobium phaeobacteroides (strain DSM 266 / SMG 266 / 2430).